Consider the following 1220-residue polypeptide: DNA-directed RNA polymerase subunit beta (1220 aa).

Belongs to the RNA polymerase beta chain family. The RNAP catalytic core consists of 2 alpha, 1 beta, 1 beta' and 1 omega subunit. When a sigma factor is associated with the core the holoenzyme is formed, which can initiate transcription.

It catalyses the reaction RNA(n) + a ribonucleoside 5'-triphosphate = RNA(n+1) + diphosphate. In terms of biological role, DNA-dependent RNA polymerase catalyzes the transcription of DNA into RNA using the four ribonucleoside triphosphates as substrates. The protein is DNA-directed RNA polymerase subunit beta of Mesomycoplasma hyopneumoniae (strain J / ATCC 25934 / NCTC 10110) (Mycoplasma hyopneumoniae).